The chain runs to 529 residues: uncharacterized protein (529 aa).

The Radical SAM core domain occupies 157–410; it reads DFPHIICEIE…FKNRVRENID (254 aa). Cys171, Cys176, and Cys179 together coordinate [4Fe-4S] cluster.

Requires [4Fe-4S] cluster as cofactor.

This is an uncharacterized protein from Archaeoglobus fulgidus (strain ATCC 49558 / DSM 4304 / JCM 9628 / NBRC 100126 / VC-16).